We begin with the raw amino-acid sequence, 181 residues long: Probable pyruvoyl-dependent arginine decarboxylase (181 aa).

Serine 43 carries the post-translational modification Pyruvic acid (Ser).

The protein belongs to the PdaD family. Pyruvate is required as a cofactor.

It catalyses the reaction L-arginine + H(+) = agmatine + CO2. The protein is Probable pyruvoyl-dependent arginine decarboxylase of Chlorobium limicola (strain DSM 245 / NBRC 103803 / 6330).